We begin with the raw amino-acid sequence, 1019 residues long: Alpha-mannosidase At3g26720 (1019 aa).

Positions 1-22 are cleaved as a signal peptide; that stretch reads MAVKCFSLYLILAAIVIGGVTS. Zn(2+)-binding residues include His47 and Asp49. N-linked (GlcNAc...) asparagine glycosylation is present at Asn64. Residue Asp169 coordinates Zn(2+). N-linked (GlcNAc...) asparagine glycosylation is found at Asn278 and Asn336. Zn(2+) is bound at residue His410. A disulfide bond links Cys466 and Cys474. 4 N-linked (GlcNAc...) asparagine glycosylation sites follow: Asn470, Asn638, Asn730, and Asn820. Cys824 and Cys829 form a disulfide bridge.

The protein belongs to the glycosyl hydrolase 38 family. As to quaternary structure, homodimer. Requires Zn(2+) as cofactor.

The enzyme catalyses Hydrolysis of terminal, non-reducing alpha-D-mannose residues in alpha-D-mannosides.. Functionally, liberates mannose from p-nitrophenyl-alpha-D-mannoside in vitro. The protein is Alpha-mannosidase At3g26720 of Arabidopsis thaliana (Mouse-ear cress).